A 1169-amino-acid polypeptide reads, in one-letter code: C5a peptidase (1169 aa).

Residues 1–31 (MRKKQKLPFDKLAIALMSTSILLNAQSDIKA) form the signal peptide. A disordered region spans residues 33–111 (TVTEDTPATE…ETIRDLNDPS (79 aa)). Positions 48–67 (PQQTAVSEEAPSSSSKETNP) are enriched in polar residues. One can recognise a Peptidase S8 domain in the interval 101–583 (KETIRDLNDP…AGAVDAKKAS (483 aa)). Residues 102–111 (ETIRDLNDPS) are compositionally biased toward basic and acidic residues. Residues aspartate 132, histidine 195, and serine 514 each act as charge relay system in the active site. The disordered stretch occupies residues 1028 to 1135 (NLLEGHSNKP…RDQLPTTNDK (108 aa)). Composition is skewed to basic and acidic residues over residues 1033–1056 (HSNK…KPEQ), 1063–1073 (PDKKPEAKPEQ), and 1080–1092 (PDKK…EKDS). Tandem repeats lie at residues 1036–1052 (KPEQ…TPET), 1053–1069 (KPEQ…KPEA), 1070–1086 (KPEQ…KPET), and 1087–1103 (KPEK…TPQK). The segment at 1036 to 1103 (KPEQDGSDQV…GQTPGKTPQK (68 aa)) is 4 X 17 AA tandem repeats. Polar residues predominate over residues 1093 to 1108 (SGQTPGKTPQKGQPSR). An LPXTG sorting signal motif is present at residues 1129–1133 (LPTTN). Residue threonine 1132 is modified to Pentaglycyl murein peptidoglycan amidated threonine. A propeptide spans 1133–1169 (NDKDTNRLHLLKLVMTTFFFGLVAHIFKTKRQKETKK) (removed by sortase).

It belongs to the peptidase S8 family. Post-translationally, cleaved by SpeB protease; leading to its degradation. Degradation by SpeB is probably strictly regulated to preserve integrity of C5a peptidase.

Its subcellular location is the secreted. It localises to the cell wall. The catalysed reaction is The primary cleavage site is at 67-His-|-Lys-68 in human C5a with a minor secondary cleavage site at 58-Ala-|-Ser-59.. In terms of biological role, this virulence factor of S.pyogenes specifically cleaves the human serum chemotaxin C5a at '68-Lys-|-Asp-69' bond near its C-terminus, destroying its ability to serve as a chemoattractant. The chain is C5a peptidase (scpA) from Streptococcus pyogenes serotype M3 (strain ATCC BAA-595 / MGAS315).